The chain runs to 142 residues: Large ribosomal subunit protein uL13 (142 aa).

This sequence belongs to the universal ribosomal protein uL13 family. In terms of assembly, part of the 50S ribosomal subunit.

Its function is as follows. This protein is one of the early assembly proteins of the 50S ribosomal subunit, although it is not seen to bind rRNA by itself. It is important during the early stages of 50S assembly. The polypeptide is Large ribosomal subunit protein uL13 (Stenotrophomonas maltophilia (strain K279a)).